Consider the following 239-residue polypeptide: Lactate utilization protein A (239 aa).

This sequence belongs to the LutA/YkgE family.

Its function is as follows. Is involved in L-lactate degradation and allows cells to grow with lactate as the sole carbon source. This chain is Lactate utilization protein A, found in Geobacillus kaustophilus (strain HTA426).